We begin with the raw amino-acid sequence, 591 residues long: Melatonin-related receptor (591 aa).

Over 1 to 38 the chain is Extracellular; that stretch reads MATVPKSNMGPTKAVPTPFGCIGCKLPKPDYPPALIIF. Residues 39–59 traverse the membrane as a helical segment; it reads MFCAMVITVVVDLIGNSMVIL. Topologically, residues 60-72 are cytoplasmic; it reads AVTKNKKLRNSGN. A helical membrane pass occupies residues 73-93; sequence IFVASLSVADMLVAIYPYPLM. Residues 94-111 lie on the Extracellular side of the membrane; that stretch reads LYAMSVGGWDLSQLQCQM. Cys109 and Cys186 form a disulfide bridge. The helical transmembrane segment at 112–132 threads the bilayer; the sequence is VGLVTGLSVVGSIFNITAIAI. The Cytoplasmic segment spans residues 133-151; the sequence is NRYCYICHSLQYKRIFSLR. The chain crosses the membrane as a helical span at residues 152-172; sequence NTCIYLVVTWVMTVLAVLPNM. Residues 173 to 196 are Extracellular-facing; the sequence is YIGTIEYDPRTYTCIFNYVNNPAF. A helical transmembrane segment spans residues 197-217; sequence TVTIVCIHFVLPLIIVGYCYT. At 218-247 the chain is on the cytoplasmic side; it reads KIWIKVLAARDPAGQNPDNQFAEVRNFLTM. The helical transmembrane segment at 248–268 threads the bilayer; it reads FVIFLLFAVCWCPVNVLTVLV. At 269 to 281 the chain is on the extracellular side; the sequence is AVIPKEMAGKIPN. A helical membrane pass occupies residues 282 to 302; it reads WLYLAAYCIAYFNSCLNAIIY. At 303–591 the chain is on the cytoplasmic side; it reads GILNESFRRE…DSDCSDEMAV (289 aa). The tract at residues 378 to 427 is disordered; that stretch reads LPGDASAPHSDRASVRPKPQTRSTSVYRKPASIHHKSISGHPKSASVYPK.

The protein belongs to the G-protein coupled receptor 1 family. In terms of assembly, homodimer, and heterodimer with MTNR1A and MTNR1B. Interacts with KAT5. Interacts with RTN4 isoform A/NOGO-A. Interacts with TGFBR1. Strongly expressed in the brain with highly restricted pattern of expression, confined to a subset of the ependymal cells of the third ventricle and a population of cells in the dorsomedial hypothalamic nucleus.

It localises to the cell membrane. It is found in the postsynaptic density. G protein-coupled receptor that plays a role in numerous physiological processes including regulation of energy metabolism, neurite outgrowth or cell migration. Promotes self-renewal and neuronal differentiation of neural progenitor cells through activation of the NOTCH and WNT/beta-catenin signaling pathways. Modulates the KAT5-dependent glucocorticoid receptor signaling by modulating KAT5 subcellular compartmentalisation. Also plays a role in the activation TGFBR1 in the absence of TGFBR2 by interfering with FKBP1A binding to TGFBR1, leading to induction of both canonical and non-canonical SMAD signaling pathways resulting in inhibition of proliferation or promotion of migration. The protein is Melatonin-related receptor (Gpr50) of Mus musculus (Mouse).